Consider the following 211-residue polypeptide: 3-demethoxyubiquinol 3-hydroxylase (211 aa).

Positions 60, 90, 93, 142, 174, and 177 each coordinate Fe cation.

Belongs to the COQ7 family. Fe cation serves as cofactor.

It is found in the cell membrane. It carries out the reaction a 5-methoxy-2-methyl-3-(all-trans-polyprenyl)benzene-1,4-diol + AH2 + O2 = a 3-demethylubiquinol + A + H2O. It participates in cofactor biosynthesis; ubiquinone biosynthesis. Its function is as follows. Catalyzes the hydroxylation of 2-nonaprenyl-3-methyl-6-methoxy-1,4-benzoquinol during ubiquinone biosynthesis. In Acinetobacter baylyi (strain ATCC 33305 / BD413 / ADP1), this protein is 3-demethoxyubiquinol 3-hydroxylase.